The following is a 378-amino-acid chain: Probable G-protein coupled receptor frpr-1 (378 aa).

7 helical membrane-spanning segments follow: residues Leu-47–Leu-67, Leu-85–Leu-105, Ala-120–Ile-140, Val-180–Pro-200, Thr-243–Ile-263, Ile-277–Val-297, and Ser-315–Phe-337.

Belongs to the G-protein coupled receptor 1 family.

Its subcellular location is the cell membrane. This is Probable G-protein coupled receptor frpr-1 from Caenorhabditis elegans.